We begin with the raw amino-acid sequence, 635 residues long: UvrABC system protein C (635 aa).

A GIY-YIG domain is found at 20–97; that stretch reads ERSGVYRMFD…IKKFQPKFNI (78 aa). The UVR domain occupies 207–242; it reads KELQENLSKKMEELSEQMRFEEAAEIRDRIKALSYV.

Belongs to the UvrC family. In terms of assembly, interacts with UvrB in an incision complex.

It is found in the cytoplasm. The UvrABC repair system catalyzes the recognition and processing of DNA lesions. UvrC both incises the 5' and 3' sides of the lesion. The N-terminal half is responsible for the 3' incision and the C-terminal half is responsible for the 5' incision. This Rickettsia bellii (strain RML369-C) protein is UvrABC system protein C.